A 229-amino-acid chain; its full sequence is Heptaprenylglyceryl phosphate synthase (229 aa).

A sn-glycerol 1-phosphate-binding site is contributed by Lys-12. Mg(2+) contacts are provided by Asp-14 and Ser-40. Sn-glycerol 1-phosphate-binding positions include Tyr-159–Gly-164, Gly-189, and Gly-209–Asn-210.

Belongs to the GGGP/HepGP synthase family. Group I subfamily. As to quaternary structure, homodimer. It depends on Mg(2+) as a cofactor.

The catalysed reaction is sn-glycerol 1-phosphate + all-trans-heptaprenyl diphosphate = 3-heptaprenyl-sn-glycero-1-phosphate + diphosphate. It functions in the pathway membrane lipid metabolism; glycerophospholipid metabolism. Functionally, prenyltransferase that catalyzes in vivo the transfer of the heptaprenyl moiety of heptaprenyl pyrophosphate (HepPP; 35 carbon atoms) to the C3 hydroxyl of sn-glycerol-1-phosphate (G1P), producing heptaprenylglyceryl phosphate (HepGP). This reaction is an ether-bond-formation step in the biosynthesis of archaea-type G1P-based membrane lipids found in Bacillales. This Bacillus cereus (strain AH187) protein is Heptaprenylglyceryl phosphate synthase.